An 80-amino-acid chain; its full sequence is Acyl carrier protein (80 aa).

In terms of domain architecture, Carrier spans 2–77 (SDIEQRVKKI…QAIDYAKAHV (76 aa)). The residue at position 37 (S37) is an O-(pantetheine 4'-phosphoryl)serine.

Belongs to the acyl carrier protein (ACP) family. 4'-phosphopantetheine is transferred from CoA to a specific serine of apo-ACP by AcpS. This modification is essential for activity because fatty acids are bound in thioester linkage to the sulfhydryl of the prosthetic group.

It localises to the cytoplasm. Its pathway is lipid metabolism; fatty acid biosynthesis. Its function is as follows. Carrier of the growing fatty acid chain in fatty acid biosynthesis. The chain is Acyl carrier protein from Herminiimonas arsenicoxydans.